The following is a 338-amino-acid chain: MISNSQLDLGISFVGSGSATPQKIIKNDQLGQRVDTNDEWIQTRTGIGQRRVIGENESLIDLATDAAVNAVKMADWDVQTIDLIILATSTPEDLFGSAPKIQSNLGASNAVAFDLTAACSGFLFALVTASQYLASGSMKRALVIGADQLSKWVDWDDRKTCVLFGDGAGAVALESSGDESGLIGYDLKSDGSKGGCLNLSQSNVFLDLVQGANHQKGEYLPIKMEGKEVYKFAVKEVPIILGEILEKCQIKSESIDWLLLHQANQRILDAVASRFSIPSEKVLSNLKYYGNTSAATIPLMLDEAVRDKRIKSGDLIACSGFGAGLSWGAALFYWHGPY.

Catalysis depends on residues C119 and H261. The ACP-binding stretch occupies residues 262–266 (QANQR). Residue N291 is part of the active site.

Belongs to the thiolase-like superfamily. FabH family. Homodimer.

It is found in the cytoplasm. It catalyses the reaction malonyl-[ACP] + acetyl-CoA + H(+) = 3-oxobutanoyl-[ACP] + CO2 + CoA. The protein operates within lipid metabolism; fatty acid biosynthesis. In terms of biological role, catalyzes the condensation reaction of fatty acid synthesis by the addition to an acyl acceptor of two carbons from malonyl-ACP. Catalyzes the first condensation reaction which initiates fatty acid synthesis and may therefore play a role in governing the total rate of fatty acid production. Possesses both acetoacetyl-ACP synthase and acetyl transacylase activities. Its substrate specificity determines the biosynthesis of branched-chain and/or straight-chain of fatty acids. This Prochlorococcus marinus (strain NATL2A) protein is Beta-ketoacyl-[acyl-carrier-protein] synthase III.